The primary structure comprises 384 residues: 8-amino-7-oxononanoate synthase (384 aa).

Arginine 21 contributes to the substrate binding site. Residue 108–109 (GF) participates in pyridoxal 5'-phosphate binding. Residue histidine 133 participates in substrate binding. 3 residues coordinate pyridoxal 5'-phosphate: serine 179, histidine 207, and threonine 233. Lysine 236 carries the N6-(pyridoxal phosphate)lysine modification. Residue threonine 352 participates in substrate binding.

Belongs to the class-II pyridoxal-phosphate-dependent aminotransferase family. BioF subfamily. In terms of assembly, homodimer. Pyridoxal 5'-phosphate serves as cofactor.

It catalyses the reaction 6-carboxyhexanoyl-[ACP] + L-alanine + H(+) = (8S)-8-amino-7-oxononanoate + holo-[ACP] + CO2. It functions in the pathway cofactor biosynthesis; biotin biosynthesis. Its function is as follows. Catalyzes the decarboxylative condensation of pimeloyl-[acyl-carrier protein] and L-alanine to produce 8-amino-7-oxononanoate (AON), [acyl-carrier protein], and carbon dioxide. In Shigella flexneri serotype 5b (strain 8401), this protein is 8-amino-7-oxononanoate synthase.